The primary structure comprises 500 residues: Glycerol kinase (500 aa).

Thr17 provides a ligand contact to ADP. ATP-binding residues include Thr17, Thr18, and Ser19. Thr17 contacts sn-glycerol 3-phosphate. Arg21 is a binding site for ADP. Sn-glycerol 3-phosphate-binding residues include Arg87, Glu88, Tyr139, and Asp243. Residues Arg87, Glu88, Tyr139, Asp243, and Gln244 each coordinate glycerol. Thr265 and Gly308 together coordinate ADP. ATP-binding residues include Thr265, Gly308, Gln312, and Gly409. ADP-binding residues include Gly409 and Asn413.

It belongs to the FGGY kinase family.

It carries out the reaction glycerol + ATP = sn-glycerol 3-phosphate + ADP + H(+). Its pathway is polyol metabolism; glycerol degradation via glycerol kinase pathway; sn-glycerol 3-phosphate from glycerol: step 1/1. Its activity is regulated as follows. Inhibited by fructose 1,6-bisphosphate (FBP). Its function is as follows. Key enzyme in the regulation of glycerol uptake and metabolism. Catalyzes the phosphorylation of glycerol to yield sn-glycerol 3-phosphate. This chain is Glycerol kinase, found in Pseudomonas fluorescens (strain Pf0-1).